We begin with the raw amino-acid sequence, 718 residues long: Ribosome-releasing factor 2, mitochondrial (718 aa).

The transit peptide at M1–Y29 directs the protein to the mitochondrion. Residues S31–E310 enclose the tr-type G domain. Residues A40–T47, D104–H108, and N158–D161 contribute to the GTP site.

The protein belongs to the TRAFAC class translation factor GTPase superfamily. Classic translation factor GTPase family. EF-G/EF-2 subfamily.

Its subcellular location is the mitochondrion. Its function is as follows. Mitochondrial GTPase that mediates the disassembly of ribosomes from messenger RNA at the termination of mitochondrial protein biosynthesis. Not involved in the GTP-dependent ribosomal translocation step during translation elongation. The sequence is that of Ribosome-releasing factor 2, mitochondrial from Drosophila erecta (Fruit fly).